The chain runs to 373 residues: GDP-mannose 4,6-dehydratase (373 aa).

Residues 9–14, 64–65, 86–90, and Tyr101 each bind NADP(+); these read GVTGQD, DL, and LGAMS. Residue Thr133 is part of the active site. Residues Glu135 and Tyr157 each act as nucleophile in the active site. Residues Lys161, His187, and Arg192 each contribute to the NADP(+) site.

The protein belongs to the NAD(P)-dependent epimerase/dehydratase family. GDP-mannose 4,6-dehydratase subfamily. The cofactor is NADP(+).

The catalysed reaction is GDP-alpha-D-mannose = GDP-4-dehydro-alpha-D-rhamnose + H2O. The protein operates within nucleotide-sugar biosynthesis; GDP-L-fucose biosynthesis via de novo pathway; GDP-L-fucose from GDP-alpha-D-mannose: step 1/2. Catalyzes the conversion of GDP-D-mannose to GDP-4-dehydro-6-deoxy-D-mannose. In Escherichia coli O157:H7, this protein is GDP-mannose 4,6-dehydratase.